The following is a 92-amino-acid chain: MSRSIHKGPFIDVSLLTRIEALNTSGKKEVIKTWSRASTIIPDMIGHTIAVYNGKQHFPVFVSDQMVGHKLGEFVPTRTFRTHVKGDRKARR.

Belongs to the universal ribosomal protein uS19 family.

Its subcellular location is the plastid. It is found in the chloroplast. Its function is as follows. Protein S19 forms a complex with S13 that binds strongly to the 16S ribosomal RNA. In Porphyra purpurea (Red seaweed), this protein is Small ribosomal subunit protein uS19c (rps19).